A 316-amino-acid polypeptide reads, in one-letter code: MAVMPPPNSVNGSERRYLEDGIWQHGRFYGSWKPGKYLFPIDSEELNRLDIFHKVFLLARDNKPFQAPIQRKAPRMMDIGTGTGIWPINVAEECFTDAQIMAVDLNQILPALIPPGVLPKQYDIEEPTWDSLYTDCDFIHMRMLLGSIQTDLWPQVYRNIFEHLAPGIGHLEHIEVDWTPRCDDDERPANSAFEKWAELFFDGMDRFNRIARVVPQETRQLLEATGFTDVKQEMIRAYVCPWSSDRQEREIARWFNIGLSHSLESLSLKPLVEKLGWKPEDVRKLCTTAKRETCVLRFHTYCNIYVWTARKPGPPQ.

It belongs to the methyltransferase superfamily. LaeA methyltransferase family. Component of the heterotrimeric velvet complex composed of laeA, ve1 and velB; Ve1 acting as a bridging protein between laeA and velB. Interacts directly with veA.

The protein resides in the nucleus. The protein localises to the cytoplasm. It carries out the reaction L-methionyl-[protein] + S-adenosyl-L-methionine = S-methyl-L-methionyl-[protein] + S-adenosyl-L-homocysteine. Functionally, methyltransferase that performs automethylation. No other methyl-accepting substrate has been identified yet. Component of the velvet transcription factor complex that acts as a global regulator for secondary metabolite gene expression. Controls the expression of the mycotoxins trichothecenes and zearalenon gene clusters. Negatively controls perithecial induction, but positively controls virulence toward the host plant. In Gibberella zeae (strain ATCC MYA-4620 / CBS 123657 / FGSC 9075 / NRRL 31084 / PH-1) (Wheat head blight fungus), this protein is Secondary metabolism regulator laeA.